The sequence spans 446 residues: MREILHIQGGQCGNQIGAKFWEVICDEHGIDHTGKYSGDSDLQLERINVYYNEASGGRYVPRAVLMDLEPGTMDSVRSGPYGQIFRPDNFVFGQSGAGNNWAKGHYTEGAELIDSVLDVVRKEAENCDCLQGFQVCHSLGGGTGSGMGTLLISKIREEYPDRMMLTFSVFPSPKVSDTVVEPYNATLSVHQLVENADECMVLDNEALYDICFRTLKLATPTFGDLNHLISATMSGVTCCLRFPGQLNSDLRKLAVNLIPFPRLHFFMVGFAPLTSRGSQQYRALTVPELTQQMWDAKNMMCAADPRHGRYLTASAMFRGKMSTKEVDEQMLNVQNKNSSYFVEWIPNNVKSSVCDIPPIGLKMASTFIGNSTSIQEMFRRVSEQFTAMFRRKAFLHWYTGEGMDEMEFTEAESNMNDLVAEYQQYQDATAEEEDYEEEEEDEEVAA.

8 residues coordinate GTP: glutamine 11, glutamate 69, serine 138, glycine 142, threonine 143, glycine 144, asparagine 204, and asparagine 226. Mg(2+) is bound at residue glutamate 69. The segment at 421–446 (EYQQYQDATAEEEDYEEEEEDEEVAA) is disordered. Positions 429-446 (TAEEEDYEEEEEDEEVAA) are enriched in acidic residues.

The protein belongs to the tubulin family. As to quaternary structure, dimer of alpha and beta chains. A typical microtubule is a hollow water-filled tube with an outer diameter of 25 nm and an inner diameter of 15 nM. Alpha-beta heterodimers associate head-to-tail to form protofilaments running lengthwise along the microtubule wall with the beta-tubulin subunit facing the microtubule plus end conferring a structural polarity. Microtubules usually have 13 protofilaments but different protofilament numbers can be found in some organisms and specialized cells. The cofactor is Mg(2+). As to expression, expressed in roots, second node, leaf sheaths, and suspension cultured cells.

The protein resides in the cytoplasm. The protein localises to the cytoskeleton. In terms of biological role, tubulin is the major constituent of microtubules, a cylinder consisting of laterally associated linear protofilaments composed of alpha- and beta-tubulin heterodimers. Microtubules grow by the addition of GTP-tubulin dimers to the microtubule end, where a stabilizing cap forms. Below the cap, tubulin dimers are in GDP-bound state, owing to GTPase activity of alpha-tubulin. This chain is Tubulin beta-3 chain (TUBB3), found in Oryza sativa subsp. japonica (Rice).